The primary structure comprises 232 residues: Caffeoyl-CoA O-methyltransferase (232 aa).

Lys6 contributes to the substrate binding site. S-adenosyl-L-methionine contacts are provided by residues Thr48, Glu70, 72–73, Ser78, Asp96, and Ala125; that span reads GV. Asp148 contributes to the substrate binding site. An a divalent metal cation-binding site is contributed by Asp148. Asp150 is an S-adenosyl-L-methionine binding site. Residues Asp174 and Asn175 each contribute to the a divalent metal cation site. Asn179 provides a ligand contact to substrate.

This sequence belongs to the class I-like SAM-binding methyltransferase superfamily. Cation-dependent O-methyltransferase family. CCoAMT subfamily. The cofactor is a divalent metal cation.

The enzyme catalyses (E)-caffeoyl-CoA + S-adenosyl-L-methionine = (E)-feruloyl-CoA + S-adenosyl-L-homocysteine + H(+). The protein operates within aromatic compound metabolism; phenylpropanoid biosynthesis. Functionally, methylates caffeoyl-CoA to feruloyl-CoA and 5-hydroxyferuloyl-CoA to sinapoyl-CoA. Plays a role in the synthesis of feruloylated polysaccharides. Involved in the reinforcement of the plant cell wall. Also involved in the responding to wounding or pathogen challenge by the increased formation of cell wall-bound ferulic acid polymers. The sequence is that of Caffeoyl-CoA O-methyltransferase from Citrus natsudaidai (Natsudaidai orange).